The following is a 416-amino-acid chain: Keratin, type I cuticular Ha1 (416 aa).

Residues methionine 1–glutamate 56 form a head region. The IF rod domain occupies glutamate 56–leucine 367. Positions lysine 57 to arginine 91 are coil 1A. A linker 1 region spans residues serine 92 to serine 102. The coil 1B stretch occupies residues tyrosine 103–cysteine 203. The linker 12 stretch occupies residues glutamine 204 to valine 219. Residues aspartate 220–glutamate 363 are coil 2. The segment at aspartate 364 to arginine 416 is tail.

Belongs to the intermediate filament family.

The sequence is that of Keratin, type I cuticular Ha1 (KRT31) from Pan troglodytes (Chimpanzee).